Here is a 339-residue protein sequence, read N- to C-terminus: mRNA cap guanine-N(7) methyltransferase 2 (339 aa).

An mRNA cap 0 methyltransferase domain is found at 1–277 (MAVTPHHRLY…LYSTFVFQKP (277 aa)). Residues Lys14, Asp54, and 82 to 83 (DP) contribute to the S-adenosyl-L-methionine site. Residues 314-339 (VSRTDILPPADNEKGILGPGPADMRL) form a disordered region.

Belongs to the class I-like SAM-binding methyltransferase superfamily. mRNA cap 0 methyltransferase family.

The protein resides in the nucleus. It catalyses the reaction a 5'-end (5'-triphosphoguanosine)-ribonucleoside in mRNA + S-adenosyl-L-methionine = a 5'-end (N(7)-methyl 5'-triphosphoguanosine)-ribonucleoside in mRNA + S-adenosyl-L-homocysteine. Functionally, mRNA-capping methyltransferase that methylates the N7 position of the added guanosine to the 5'-cap structure of mRNAs. Binds RNA containing 5'-terminal GpppC. The protein is mRNA cap guanine-N(7) methyltransferase 2 of Oryza sativa subsp. japonica (Rice).